The primary structure comprises 206 residues: Reticulon-like protein B13 (206 aa).

Positions 16 to 206 (VEDIYLWRRK…GTEEKVKKSE (191 aa)) constitute a Reticulon domain. Transmembrane regions (helical) follow at residues 27-47 (LAFSTLLVSTSTWILLSFYGF), 50-70 (ITIVSWIGIAVVSMIFLWGSL), and 134-154 (IGNLLDFHTCLFIGLVMGLTV).

Its subcellular location is the endoplasmic reticulum membrane. The sequence is that of Reticulon-like protein B13 (RTNLB13) from Arabidopsis thaliana (Mouse-ear cress).